A 373-amino-acid polypeptide reads, in one-letter code: ATP synthase gamma chain 1, chloroplastic (373 aa).

Residues 1 to 50 (MACSNLTTMWVSSKPSLSADSSSLSFRSVLKCPTNTSSPPSRASSVSPLQ) constitute a chloroplast transit peptide. Cys139 is an active-site residue. A disulfide bond links Cys249 and Cys255. Position 347 is a phosphoserine (Ser347).

Belongs to the ATPase gamma chain family. In terms of assembly, F-type ATPases have 2 components, CF(1) - the catalytic core - and CF(0) - the membrane proton channel. CF(1) has five subunits: alpha(3), beta(3), gamma(1), delta(1), epsilon(1). CF(0) has four main subunits: a, b, b' and c. Interacts with PAB.

It is found in the plastid. Its subcellular location is the chloroplast thylakoid membrane. Functionally, produces ATP from ADP in the presence of a proton gradient across the membrane. The gamma chain is believed to be important in regulating ATPase activity and the flow of protons through the CF(0) complex. This chain is ATP synthase gamma chain 1, chloroplastic (ATPC1), found in Arabidopsis thaliana (Mouse-ear cress).